Consider the following 334-residue polypeptide: D-fructose 1,6-bisphosphatase class 2/sedoheptulose 1,7-bisphosphatase (334 aa).

Asp33, Glu57, Asp85, and Glu88 together coordinate Mn(2+). Substrate-binding positions include 88–90 (EGT), Tyr119, 164–166 (RAR), and 186–188 (DGD). Glu213 provides a ligand contact to Mn(2+).

This sequence belongs to the FBPase class 2 family. Homotetramer. Mn(2+) is required as a cofactor.

The catalysed reaction is beta-D-fructose 1,6-bisphosphate + H2O = beta-D-fructose 6-phosphate + phosphate. It carries out the reaction D-sedoheptulose 1,7-bisphosphate + H2O = D-sedoheptulose 7-phosphate + phosphate. It participates in carbohydrate biosynthesis; Calvin cycle. In terms of biological role, catalyzes the hydrolysis of fructose 1,6-bisphosphate (Fru 1,6-P2) and sedoheptulose 1,7-bisphosphate (Sed 1,7-P2) to fructose 6-phosphate and sedoheptulose 7-phosphate, respectively. The chain is D-fructose 1,6-bisphosphatase class 2/sedoheptulose 1,7-bisphosphatase from Synechococcus sp. (strain CC9902).